Consider the following 119-residue polypeptide: Holo-[acyl-carrier-protein] synthase (119 aa).

The Mg(2+) site is built by Asp5 and Glu51.

It belongs to the P-Pant transferase superfamily. AcpS family. Mg(2+) serves as cofactor.

It is found in the cytoplasm. It carries out the reaction apo-[ACP] + CoA = holo-[ACP] + adenosine 3',5'-bisphosphate + H(+). In terms of biological role, transfers the 4'-phosphopantetheine moiety from coenzyme A to a Ser of acyl-carrier-protein. In Helicobacter pylori (strain ATCC 700392 / 26695) (Campylobacter pylori), this protein is Holo-[acyl-carrier-protein] synthase.